Reading from the N-terminus, the 343-residue chain is Ferrochelatase (343 aa).

Residues His191 and Glu270 each coordinate Fe cation.

It belongs to the ferrochelatase family.

The protein localises to the cytoplasm. It carries out the reaction heme b + 2 H(+) = protoporphyrin IX + Fe(2+). The protein operates within porphyrin-containing compound metabolism; protoheme biosynthesis; protoheme from protoporphyrin-IX: step 1/1. Its function is as follows. Catalyzes the ferrous insertion into protoporphyrin IX. The chain is Ferrochelatase from Phenylobacterium zucineum (strain HLK1).